The chain runs to 257 residues: Acetyl-coenzyme A carboxylase carboxyl transferase subunit beta (257 aa).

Residues 5–257 enclose the CoA carboxyltransferase N-terminal domain; sequence VFTKCERCKQ…DLERLLGFVG (253 aa). Positions 9, 12, 28, and 31 each coordinate Zn(2+). Residues 9 to 31 form a C4-type zinc finger; that stretch reads CERCKQPVYEKDLRARFNVCPNC.

Belongs to the AccD/PCCB family. Acetyl-CoA carboxylase is a heterohexamer composed of biotin carboxyl carrier protein (AccB), biotin carboxylase (AccC) and two subunits each of ACCase subunit alpha (AccA) and ACCase subunit beta (AccD). It depends on Zn(2+) as a cofactor.

The protein resides in the cytoplasm. The catalysed reaction is N(6)-carboxybiotinyl-L-lysyl-[protein] + acetyl-CoA = N(6)-biotinyl-L-lysyl-[protein] + malonyl-CoA. Its pathway is lipid metabolism; malonyl-CoA biosynthesis; malonyl-CoA from acetyl-CoA: step 1/1. In terms of biological role, component of the acetyl coenzyme A carboxylase (ACC) complex. Biotin carboxylase (BC) catalyzes the carboxylation of biotin on its carrier protein (BCCP) and then the CO(2) group is transferred by the transcarboxylase to acetyl-CoA to form malonyl-CoA. This Rubrobacter xylanophilus (strain DSM 9941 / JCM 11954 / NBRC 16129 / PRD-1) protein is Acetyl-coenzyme A carboxylase carboxyl transferase subunit beta.